The chain runs to 672 residues: DNA ligase (672 aa).

Residues 34-38 (DSVYD), 83-84 (SL), and Glu113 each bind NAD(+). The N6-AMP-lysine intermediate role is filled by Lys115. Positions 136, 170, 286, and 310 each coordinate NAD(+). Zn(2+) is bound by residues Cys404, Cys407, Cys422, and Cys427. Positions 592–672 (STDSSFNGLR…EFIQQMEEES (81 aa)) constitute a BRCT domain.

It belongs to the NAD-dependent DNA ligase family. LigA subfamily. Requires Mg(2+) as cofactor. Mn(2+) serves as cofactor.

The enzyme catalyses NAD(+) + (deoxyribonucleotide)n-3'-hydroxyl + 5'-phospho-(deoxyribonucleotide)m = (deoxyribonucleotide)n+m + AMP + beta-nicotinamide D-nucleotide.. Its function is as follows. DNA ligase that catalyzes the formation of phosphodiester linkages between 5'-phosphoryl and 3'-hydroxyl groups in double-stranded DNA using NAD as a coenzyme and as the energy source for the reaction. It is essential for DNA replication and repair of damaged DNA. In Ligilactobacillus salivarius (strain UCC118) (Lactobacillus salivarius), this protein is DNA ligase.